The sequence spans 383 residues: MRSTVSVIKADIGSLAGHHVVHPDTMAAANRVLAEAKRQGIILDYYITNVGDDLELIMSHTRGELDTKVHETAWDAFKEATKVSKELGLYAAGQDLLSDSFSGNLKGMGPGIAELDIEERPSEPIAIFMADKTEPGAFNLPLYKMFADPFNTAGLVIDPTMNEGFKFEVLDVYEGQSVVLNSPEEMYSLLGLIGTPARYVIRRVYRKADNMIGSVTSIERLNLIAGKYVGKDDPVLIVRLQHGFPALGEALEAFSFPYLVPGWMRGSHYGPIMPVSQRDAKATRFDGPPRLIGLGFNVKNGKLTGPSDLFDDPAFDETRRMASVITDYMRRHGPFMPHRLEPTEMEYTTLPTLIEKLKPRFKKEEDVKKAKPSVYTSKDQGMD.

Residue aspartate 11 is the Proton acceptor; for FBP phosphatase activity of the active site. Mg(2+)-binding residues include aspartate 11, histidine 18, aspartate 52, and aspartate 53. Residue histidine 18 participates in beta-D-fructose 1,6-bisphosphate binding. Residue histidine 18 coordinates dihydroxyacetone phosphate. Tyrosine 90 is a binding site for beta-D-fructose 1,6-bisphosphate. Residue glutamine 94 participates in Mg(2+) binding. 103–104 provides a ligand contact to beta-D-fructose 1,6-bisphosphate; it reads GN. Aspartate 131 serves as a coordination point for Mg(2+). Lysine 132 is a beta-D-fructose 1,6-bisphosphate binding site. Lysine 132 lines the dihydroxyacetone phosphate pocket. Tyrosine 228 acts as the Proton donor/acceptor; for FBP aldolase activity in catalysis. Positions 231, 232, and 233 each coordinate Mg(2+). The active-site Schiff-base intermediate with DHAP; for FBP aldolase activity is the lysine 231. Residues 241–242, arginine 265, aspartate 286, and tyrosine 347 each bind beta-D-fructose 1,6-bisphosphate; that span reads QH. The dihydroxyacetone phosphate site is built by arginine 265 and aspartate 286. The segment at 361–383 is disordered; that stretch reads FKKEEDVKKAKPSVYTSKDQGMD. The segment covering 374–383 has biased composition (polar residues); it reads VYTSKDQGMD.

It belongs to the FBP aldolase/phosphatase family. As to quaternary structure, homooctamer; dimer of tetramers. Mg(2+) serves as cofactor.

The enzyme catalyses beta-D-fructose 1,6-bisphosphate + H2O = beta-D-fructose 6-phosphate + phosphate. It catalyses the reaction beta-D-fructose 1,6-bisphosphate = D-glyceraldehyde 3-phosphate + dihydroxyacetone phosphate. The protein operates within carbohydrate biosynthesis; gluconeogenesis. Catalyzes two subsequent steps in gluconeogenesis: the aldol condensation of dihydroxyacetone phosphate (DHAP) and glyceraldehyde-3-phosphate (GA3P) to fructose-1,6-bisphosphate (FBP), and the dephosphorylation of FBP to fructose-6-phosphate (F6P). The chain is Fructose-1,6-bisphosphate aldolase/phosphatase from Metallosphaera sedula (strain ATCC 51363 / DSM 5348 / JCM 9185 / NBRC 15509 / TH2).